Reading from the N-terminus, the 75-residue chain is UPF0057 membrane protein At2g24040 (75 aa).

2 consecutive transmembrane segments (helical) span residues S4–L24 and F33–Y53.

This sequence belongs to the UPF0057 (PMP3) family.

It localises to the membrane. The sequence is that of UPF0057 membrane protein At2g24040 from Arabidopsis thaliana (Mouse-ear cress).